The chain runs to 452 residues: Glycine receptor subunit alpha-2 (452 aa).

Residues 1 to 27 (MNRQLVNILTALFAFFLETNHFRTAFC) form the signal peptide. Residues 28-256 (KDHDSRSGKQ…KFHLERQMGY (229 aa)) are Extracellular-facing. N-linked (GlcNAc...) asparagine glycosylation is present at asparagine 72. A glycine-binding site is contributed by arginine 99. Arginine 99 provides a ligand contact to strychnine. The N-linked (GlcNAc...) asparagine glycan is linked to asparagine 103. Serine 163 provides a ligand contact to glycine. Cysteines 172 and 186 form a disulfide. 2 residues coordinate Zn(2+): glutamate 226 and glutamate 228. A disulfide bridge links cysteine 232 with cysteine 243. Residue threonine 238 coordinates glycine. Histidine 249 provides a ligand contact to Zn(2+). The helical transmembrane segment at 257–278 (YLIQMYIPSLLIVILSWVSFWI) threads the bilayer. Residues 279–283 (NMDAA) lie on the Cytoplasmic side of the membrane. The chain crosses the membrane as a helical span at residues 284-304 (PARVALGITTVLTMTTQSSGS). Residues 305 to 315 (RASLPKVSYVK) lie on the Extracellular side of the membrane. Residues 316-336 (AIDIWMAVCLLFVFAALLEYA) form a helical membrane-spanning segment. Residues 337-420 (AVNFVSRQHK…FVDRAKRIDT (84 aa)) are Cytoplasmic-facing. Residues 421–441 (ISRAAFPLAFLIFNIFYWITY) traverse the membrane as a helical segment. The Extracellular segment spans residues 442-452 (KIIRHEDVHKK).

Belongs to the ligand-gated ion channel (TC 1.A.9) family. Glycine receptor (TC 1.A.9.3) subfamily. GLRA2 sub-subfamily. In terms of assembly, interacts with GLRB. Heteropentamer composed of GLRA2 and GLRB. Functional GLRB-GLRA2 heteropentamers contain four GLRA2 subunits and one GLRB subunit, although alternative subunit composition cannot be excluded. Homopentamer (in vitro). Both homopentamers and heteropentamers form functional ion channels, but their characteristics are subtly different.

The protein localises to the postsynaptic cell membrane. It localises to the synapse. The protein resides in the cell membrane. Its subcellular location is the cell projection. The catalysed reaction is chloride(in) = chloride(out). Its activity is regulated as follows. Channel opening is triggered by extracellular glycine. Channel opening is also triggered by taurine and beta-alanine. Inhibited by strychnine. Inhibited by picrotoxin. Channel activity is potentiated by 10-100 uM Zn(2+). Channel activity is marginally increased by 50 mM ethanol; it is strongly increased by a combination of 0.5 uM Zn(2+) and 50 mM ethanol. Channel activity is inhibited by 100-1000 uM Zn(2+). In terms of biological role, subunit of heteromeric glycine-gated chloride channels. Plays a role in synaptic plasticity. Contributes to the generation of inhibitory postsynaptic currents, and is involved in the down-regulation of neuronal excitability. Plays a role in cellular responses to ethanol. This Homo sapiens (Human) protein is Glycine receptor subunit alpha-2.